Reading from the N-terminus, the 304-residue chain is Probable HTH-type transcriptional regulator LgoR (304 aa).

The HTH gntR-type domain occupies M1–K70. Positions Q31–S50 form a DNA-binding region, H-T-H motif.

May be a positive transcriptional regulator for lgoD and/or lgoT. Is essential for growth on L-galactonate as the sole carbon source. The polypeptide is Probable HTH-type transcriptional regulator LgoR (lgoR) (Escherichia coli (strain K12)).